The primary structure comprises 271 residues: 2,3,4,5-tetrahydropyridine-2,6-dicarboxylate N-succinyltransferase (271 aa).

Substrate is bound by residues Arg103 and Asp140.

Belongs to the transferase hexapeptide repeat family. In terms of assembly, homotrimer.

It is found in the cytoplasm. The enzyme catalyses (S)-2,3,4,5-tetrahydrodipicolinate + succinyl-CoA + H2O = (S)-2-succinylamino-6-oxoheptanedioate + CoA. It participates in amino-acid biosynthesis; L-lysine biosynthesis via DAP pathway; LL-2,6-diaminopimelate from (S)-tetrahydrodipicolinate (succinylase route): step 1/3. The polypeptide is 2,3,4,5-tetrahydropyridine-2,6-dicarboxylate N-succinyltransferase (Methylococcus capsulatus (strain ATCC 33009 / NCIMB 11132 / Bath)).